The sequence spans 178 residues: SPbeta prophage-derived uncharacterized protein YonC (178 aa).

The protein is SPbeta prophage-derived uncharacterized protein YonC (yonC) of Bacillus subtilis (strain 168).